The chain runs to 42 residues: Gastric inhibitory polypeptide (42 aa).

It belongs to the glucagon family.

The protein localises to the secreted. In terms of biological role, potent stimulator of insulin secretion and relatively poor inhibitor of gastric acid secretion. This is Gastric inhibitory polypeptide (GIP) from Sus scrofa (Pig).